We begin with the raw amino-acid sequence, 274 residues long: Large ribosomal subunit protein uL2cz/uL2cy (274 aa).

Disordered stretches follow at residues 1–22 and 225–274; these read MAIHLYKTSTPSTRNGAVDSQV and PVDH…RRSK.

This sequence belongs to the universal ribosomal protein uL2 family. In terms of assembly, part of the 50S ribosomal subunit.

It is found in the plastid. The protein resides in the chloroplast. This is Large ribosomal subunit protein uL2cz/uL2cy (rpl2-A) from Arabis hirsuta (Hairy rock-cress).